Here is a 55-residue protein sequence, read N- to C-terminus: Protein CADMIUM TOLERANCE 1 (55 aa).

Residues 24 to 40 form a helical membrane-spanning segment; that stretch reads GCLYACIFTALCCFCCY.

It belongs to the CYSTM1 family.

The protein resides in the cell membrane. It is found in the secreted. It localises to the cell wall. Its function is as follows. Confers resistance to heavy metal ions (e.g. cadmium (CdCl(2)) and copper (CuCl(2))) by chelating them at the plasma membrane of root cells, thus stopping their entry and reducing their accumulation. Binds to aluminium (Al). The protein is Protein CADMIUM TOLERANCE 1 of Oryza sativa subsp. indica (Rice).